Consider the following 270-residue polypeptide: MTQKKENRITARLREDRKLLLAYYMPEFPVAGSTLPVLEALQDGGADIIELGIPFSDPVGDGPVIQNAAHIAIRNGVSVRSLLELVRKARAGEGCRKITVPILLMGYSNPLIAYGGDCFLHDAVKAGVDGLLIPDLPPEESADFLQRAKSLGLTVVYLISPVTPPERIEWIDSLSTDFSYCLAVNATTGTAKLADASTEASVDRYLERVRLHARKKFVVGFGIRDRARVEHMWRLADGAVVGTALLEHIAGAPNPGEAARRAGEFWRGLR.

Catalysis depends on proton acceptor residues glutamate 50 and aspartate 61.

This sequence belongs to the TrpA family. As to quaternary structure, tetramer of two alpha and two beta chains.

The enzyme catalyses (1S,2R)-1-C-(indol-3-yl)glycerol 3-phosphate + L-serine = D-glyceraldehyde 3-phosphate + L-tryptophan + H2O. It participates in amino-acid biosynthesis; L-tryptophan biosynthesis; L-tryptophan from chorismate: step 5/5. Its function is as follows. The alpha subunit is responsible for the aldol cleavage of indoleglycerol phosphate to indole and glyceraldehyde 3-phosphate. This chain is Tryptophan synthase alpha chain, found in Chlorobium luteolum (strain DSM 273 / BCRC 81028 / 2530) (Pelodictyon luteolum).